A 414-amino-acid chain; its full sequence is Ribulose bisphosphate carboxylase large chain (414 aa).

2 residues coordinate substrate: Asn-102 and Thr-152. The Proton acceptor role is filled by Lys-154. A substrate-binding site is contributed by Lys-156. Residues Lys-180, Asp-182, and Glu-183 each contribute to the Mg(2+) site. Lys-180 carries the post-translational modification N6-carboxylysine. His-273 functions as the Proton acceptor in the catalytic mechanism. Residues Arg-274, His-306, and Ser-358 each contribute to the substrate site.

It belongs to the RuBisCO large chain family. Type I subfamily. Heterohexadecamer of 8 large chains and 8 small chains; disulfide-linked. The disulfide link is formed within the large subunit homodimers. Mg(2+) serves as cofactor. The disulfide bond which can form in the large chain dimeric partners within the hexadecamer appears to be associated with oxidative stress and protein turnover.

It localises to the plastid. The protein localises to the chloroplast. The catalysed reaction is 2 (2R)-3-phosphoglycerate + 2 H(+) = D-ribulose 1,5-bisphosphate + CO2 + H2O. It carries out the reaction D-ribulose 1,5-bisphosphate + O2 = 2-phosphoglycolate + (2R)-3-phosphoglycerate + 2 H(+). Functionally, ruBisCO catalyzes two reactions: the carboxylation of D-ribulose 1,5-bisphosphate, the primary event in carbon dioxide fixation, as well as the oxidative fragmentation of the pentose substrate in the photorespiration process. Both reactions occur simultaneously and in competition at the same active site. The chain is Ribulose bisphosphate carboxylase large chain (rbcL) from Antrophyum reticulatum (Ox-tongue fern).